Consider the following 515-residue polypeptide: NAD(P)H-quinone oxidoreductase subunit 2 (515 aa).

A run of 14 helical transmembrane segments spans residues 14–34 (TILPETILIVTLLVVLLADLI), 42–62 (WTPYFAIVGLGGAIATMIPLW), 79–99 (LSLFFRGLIALSALGTILMSI), 109–128 (LGEFMTILLTATVGGMFIAG), 132–151 (LVFIFVALETLSIASYLLTG), 167–187 (LLIGAASSAIFLYGSSLLYGL), 206–226 (LGLVVALVFVIAGISFKISAV), 240–260 (PTPVVAFLSVGSKAAGFALAI), 274–294 (WQLIFTVLAILSMILGNVVAL), 302–322 (MLAYSSIGQAGFVMIGFVVGT), 330–350 (LFYLLVYLFMNLGAFTCVILF), 374–394 (LGLSLCLLSLGGIPPLAGFFG), 396–416 (IYLFWAGWQAGAYGLVLLGLL), and 462–482 (VGLVMTVIATSLAGILANPLF).

The protein belongs to the complex I subunit 2 family. In terms of assembly, NDH-1 can be composed of about 15 different subunits; different subcomplexes with different compositions have been identified which probably have different functions.

The protein localises to the cellular thylakoid membrane. It catalyses the reaction a plastoquinone + NADH + (n+1) H(+)(in) = a plastoquinol + NAD(+) + n H(+)(out). The enzyme catalyses a plastoquinone + NADPH + (n+1) H(+)(in) = a plastoquinol + NADP(+) + n H(+)(out). Functionally, NDH-1 shuttles electrons from an unknown electron donor, via FMN and iron-sulfur (Fe-S) centers, to quinones in the respiratory and/or the photosynthetic chain. The immediate electron acceptor for the enzyme in this species is believed to be plastoquinone. Couples the redox reaction to proton translocation, and thus conserves the redox energy in a proton gradient. Cyanobacterial NDH-1 also plays a role in inorganic carbon-concentration. In Thermosynechococcus vestitus (strain NIES-2133 / IAM M-273 / BP-1), this protein is NAD(P)H-quinone oxidoreductase subunit 2.